Consider the following 314-residue polypeptide: Ribosomal RNA small subunit methyltransferase H (314 aa).

Residues 40–42 (GGH), aspartate 60, phenylalanine 85, aspartate 107, and glutamine 114 contribute to the S-adenosyl-L-methionine site.

Belongs to the methyltransferase superfamily. RsmH family.

It is found in the cytoplasm. The catalysed reaction is cytidine(1402) in 16S rRNA + S-adenosyl-L-methionine = N(4)-methylcytidine(1402) in 16S rRNA + S-adenosyl-L-homocysteine + H(+). Functionally, specifically methylates the N4 position of cytidine in position 1402 (C1402) of 16S rRNA. This is Ribosomal RNA small subunit methyltransferase H from Hydrogenovibrio crunogenus (strain DSM 25203 / XCL-2) (Thiomicrospira crunogena).